A 616-amino-acid polypeptide reads, in one-letter code: Zinc metalloproteinase-disintegrin-like protein H3 (616 aa).

Residues 1-20 (MIQVLLVIICLAVFPYQGSS) form the signal peptide. Positions 21-193 (IILESGNVND…KKASQLNLTP (173 aa)) are excised as a propeptide. Glu-194 is subject to Pyrrolidone carboxylic acid (Glu). In terms of domain architecture, Peptidase M12B spans 203 to 399 (KYIKLVIVAD…KMPQCILNKP (197 aa)). 3 disulfides stabilise this stretch: Cys-314-Cys-394, Cys-354-Cys-378, and Cys-356-Cys-361. His-339 provides a ligand contact to Zn(2+). The Metal-binding signature appears at 339-350 (HEMGHNLGMDHD). The Proton acceptor role is filled by Glu-340. The Zn(2+) site is built by His-343 and His-349. An N-linked (GlcNAc...) asparagine glycan is attached at Asn-377. The Disintegrin domain occupies 407–493 (PAVCGNYLVE…ECPTDQFQRN (87 aa)). Val-409, Asn-412, Glu-416, Glu-419, and Asp-422 together coordinate Ca(2+). Intrachain disulfides connect Cys-410/Cys-439, Cys-421/Cys-434, Cys-423/Cys-429, Cys-433/Cys-456, Cys-447/Cys-453, Cys-452/Cys-478, Cys-465/Cys-485, Cys-472/Cys-504, Cys-497/Cys-509, Cys-516/Cys-566, Cys-531/Cys-577, Cys-544/Cys-554, Cys-561/Cys-603, and Cys-597/Cys-609. Residues 471-473 (ECD) carry the D/ECD-tripeptide motif. Ca(2+) contacts are provided by Asp-473, Asp-476, and Asp-488. Asn-506 carries an N-linked (GlcNAc...) asparagine glycan.

This sequence belongs to the venom metalloproteinase (M12B) family. P-III subfamily. P-IIIc sub-subfamily. As to quaternary structure, homodimer; disulfide-linked. It depends on Zn(2+) as a cofactor. N-glycosylated. Post-translationally, the N-terminus is blocked. In terms of tissue distribution, expressed by the venom gland (at protein level). Expressed by the venom gland.

The protein resides in the secreted. The proteolytic activity requires Zn(2+) and Ca(2+) ions. The alpha-fibrinogenase activity is completely inhibited by EDTA, but not by PMSF. In terms of biological role, zinc metalloprotease that has fibrinogenolytic and hemorrhagic activities. Cleaves insulin B chain readily at '38-Ala-|-Leu-39' bond, and at a significantly slower rate, at '40-Tyr-|-Leu-41' bond. Hydrolyzes isolated extracellular matrix (ECM) bovine fibronectin, and basal membrane (BM) proteins human collagen IV and, to a lesser extent, murine laminin, in vitro. Cleaves murine nidogen (at '350-Ser-|-Phe-351' and '380-Tyr-|-Asn-381' bonds), but not laminin, in a solubilized BM preparation. Hydrolyzes plasma proteins involved in blood coagulation in vitro. It significantly prolongs thrombin time. Has potent alpha-fibrinogenase activity cleaving human fibrinogen alpha chain at '432-Lys-|-Leu-433' bond, but does not cleave beta or gamma chains. Hydrolyzes bovine prothrombin, but does not cleave it at '366-Arg-|-Ile-367' bond, which is necessary for the formation of active alpha-thrombin, however, the cleavage of fragment 1 from it leads to reduced alpha-thrombin formation. Hydrolyzes bovine factor X heavy chain at '211-Ser-|-Leu-212', '213-Asp-|-Leu-214' and '216-Gly-|-Leu-217' bonds activating it only marginally as does not cleave at the physiological activation site. Does not cleave factor X light chain. No hydrolysis or activation of plasminogen. The alpha-fibrinogenase activity likely contributes to its hemorrhagic activity, which in rat can be completely neutralized in vivo by anti-ammodytagin antibodies, which strongly cross-react with this protein. Has very weak collagen-, ADP- and ristocetin-induced platelet aggregation inhibition activity in vitro. This is Zinc metalloproteinase-disintegrin-like protein H3 from Vipera ammodytes ammodytes (Western sand viper).